A 141-amino-acid chain; its full sequence is Brain ribonuclease (141 aa).

A disordered region spans residues 1–25; the sequence is KETAAAKFRRQHMDSGSSSSSNSNY. Lys7 and Arg10 together coordinate substrate. The active-site Proton acceptor is His12. Residues 15–24 show a composition bias toward low complexity; the sequence is SGSSSSSNSN. 4 disulfides stabilise this stretch: Cys26–Cys84, Cys40–Cys95, Cys58–Cys110, and Cys65–Cys72. 41–45 contributes to the substrate binding site; it reads KPVNT. Asn62 is a glycosylation site (N-linked (GlcNAc...) asparagine). Residues Lys66 and Arg85 each contribute to the substrate site. His119 functions as the Proton donor in the catalytic mechanism. Residue Thr129 is glycosylated (O-linked (GalNAc...) threonine).

It belongs to the pancreatic ribonuclease family.

The protein resides in the secreted. This chain is Brain ribonuclease (BRN), found in Giraffa camelopardalis (Giraffe).